We begin with the raw amino-acid sequence, 501 residues long: Melianol synthase CYP71BQ5 (501 aa).

The helical transmembrane segment at 1 to 21 (MEFRLPVLLSFLLFFLMLVRH) threads the bilayer. Heme is bound at residue Cys-439.

The protein belongs to the cytochrome P450 family. The cofactor is heme. As to expression, mainly expressed in petioles and roots, and, to a lower extent, in leaves.

The protein resides in the membrane. It carries out the reaction dihydroniloticin + 2 reduced [NADPH--hemoprotein reductase] + 2 O2 = melianol + 2 oxidized [NADPH--hemoprotein reductase] + 3 H2O + 2 H(+). The protein operates within secondary metabolite biosynthesis; terpenoid biosynthesis. Monooxygenase involved in the biosynthesis of limonoids triterpene natural products such as azadirachtin, an antifeedant widely used as bioinsecticide, and possessing many medicinal applications including anti-tumoral, anti-malarial, anti-rheumatic, antibacterial, anti-inflammatory, anti-pyretic and diuretic effects. Catalyzes the conversion of dihydroniloticin to the protolimonoid melianol. In Melia azedarach (Chinaberry tree), this protein is Melianol synthase CYP71BQ5.